The primary structure comprises 759 residues: LIM domain and actin-binding protein 1 (759 aa).

M1 is modified (N-acetylmethionine). S4, S15, and S55 each carry phosphoserine. The tract at residues 78–131 (NPGLGAESHTDSLRNSSTEIRHRADHPPAEVTSHAASGAKADQEEQIHPRSRLR) is disordered. Over residues 96-105 (EIRHRADHPP) the composition is skewed to basic and acidic residues. Position 132 is a phosphoserine (S132). A compositionally biased stretch (basic and acidic residues) spans 146 to 177 (KDGEDLKDHSTESKKMENCLGESRHEVEKSEI). The interval 146–182 (KDGEDLKDHSTESKKMENCLGESRHEVEKSEISENTD) is disordered. Residues 164–166 (CLG) carry the Required for interaction with NPC1L1 motif. Phosphoserine is present on residues A183 and S225. Disordered regions lie at residues 211-264 (ILRA…RLSE) and 323-381 (EKIS…AMKK). Position 229 is a phosphotyrosine (Y229). S230 and S242 each carry phosphoserine. The segment covering 247-258 (DSEKNESRRNLE) has biased composition (basic and acidic residues). A phosphoserine mark is found at S263, S343, S350, S362, S365, S369, and S374. The segment covering 362–376 (SPDSRASSLSESSPP) has biased composition (low complexity). The LIM zinc-binding domain maps to 388 to 448 (ETCVECQKTV…KPHFNQLFKS (61 aa)). Residue K439 is modified to N6-succinyllysine. S490 is modified (phosphoserine). A required for interaction with MYO5B region spans residues 493-513 (VEDAPIAKVGVLAASMEAKAS). Residues 509-709 (EAKASSQQEK…QEPKSLNWSS (201 aa)) form a disordered region. Basic and acidic residues-rich tracts occupy residues 516 to 527 (QEKEDKPAETKK) and 556 to 567 (WPPEDEISKPEV). A compositionally biased stretch (polar residues) spans 595-607 (ASFQSTSVKSPKT). Residues S601, S604, S609, and S617 each carry the phosphoserine modification. Residues 644–655 (KNGNVGKTTWQN) show a composition bias toward polar residues. The segment covering 656–673 (KESKGETGKRSKEGHSLE) has biased composition (basic and acidic residues). Residues 674–691 (MENENLVENGADSDEDDN) show a composition bias toward acidic residues. S686, S692, S698, S726, and S741 each carry phosphoserine. A compositionally biased stretch (polar residues) spans 693 to 709 (FLKQQSPQEPKSLNWSS).

As to quaternary structure, interacts with NPC1L1; bridges NPC1L1 with MYO5B. Interacts with MYO5B; bridges NPC1L1 with MYO5B. Interacts with PXN; this complex stabilizes actin dynamics. Interacts with F-actin and G-actin. Interacts with LUZP1 (via C-terminus); both proteins restrict ciliation and may work together to regulate this process. Binds RAB40B (GTP-bound); interaction influences LIMA1 subcellular localization in lamellipodia during cell migration. Ubiquitinated by the ECS(RAB40B) complex leading to its degradation. Post-translationally, phosphorylation of the C-terminal region by MAPK1/MAPK3 reduces its association with F-actin and contributes to actin filament reorganization and enhances cell motility. Highly expressed in placenta, kidney, pancreas, prostate, ovary, spleen and heart. Also detected in lung, liver, brain, skeletal muscle, thymus, testis and intestine. Not detected in leukocytes. Isoform Beta expressed generally at very low levels. Isoform Alpha abundant in epithelial cells from mammary gland, prostate and in normal oral keratinocytes. Low levels in aortic endothelial cells and dermal fibroblasts. Not detectable in myocardium.

The protein resides in the cytoplasm. The protein localises to the cell junction. Its subcellular location is the focal adhesion. It localises to the cytoskeleton. It is found in the stress fiber. The protein resides in the cell membrane. The protein localises to the cell projection. Its subcellular location is the ruffle. It localises to the lamellipodium. Functionally, actin-binding protein involved in actin cytoskeleton regulation and dynamics. Increases the number and size of actin stress fibers and inhibits membrane ruffling. Inhibits actin filament depolymerization. Bundles actin filaments, delays filament nucleation and reduces formation of branched filaments. Acts as a negative regulator of primary cilium formation. Plays a role in cholesterol homeostasis. Influences plasma cholesterol levels through regulation of intestinal cholesterol absorption. May act as a scaffold protein by regulating NPC1L1 transportation, an essential protein for cholesterol absorption, to the plasma membrane by recruiting MYO5B to NPC1L1, and thus facilitates cholesterol uptake. The chain is LIM domain and actin-binding protein 1 from Homo sapiens (Human).